Consider the following 821-residue polypeptide: Calpain-3 (821 aa).

Residues 7–37 (ASVAPRTAAEPRSPGPVPHPAQSKATEAGGG) are disordered. Residues 74 to 417 (LYVDPEFPPD…FTKLEICNLT (344 aa)) enclose the Calpain catalytic domain. Active-site residues include Cys-129, His-334, and Asn-358. Residues 418–586 (ADALQSDKLQ…KRNLSEEVEN (169 aa)) form a domain III region. The linker stretch occupies residues 587–649 (TISVDRPVKK…QPGSSDQESE (63 aa)). Residues 609–652 (ANSNKELGVDQESEEGKGKTSPDKQKQSPQPQPGSSDQESEEQQ) form a disordered region. Over residues 622–634 (EEGKGKTSPDKQK) the composition is skewed to basic and acidic residues. Positions 635 to 645 (QSPQPQPGSSD) are enriched in low complexity. EF-hand domains lie at 649-683 (EEQQ…VVNK), 692-725 (FTLE…NKIK), 722-757 (NKIK…AGFH), and 787-821 (VRLE…TMYA). Residues 650 to 821 (EQQQFRNIFK…LEWLQLTMYA (172 aa)) form a domain IV region. Ala-662, Asp-665, Glu-667, Glu-672, Asp-705, Asp-707, Ser-709, Lys-711, Glu-716, Asp-735, Asp-737, Ser-739, Thr-741, Glu-746, Asp-800, Asp-802, Asp-804, and Ile-806 together coordinate Ca(2+).

This sequence belongs to the peptidase C2 family. As to quaternary structure, homodimer; via EF-hand domain 4. Interacts with TTN/titin. Interacts with CMYA5; this interaction, which results in CMYA5 proteolysis, may protect CAPN3 from autolysis. Interacts with SIMC1. Interacts with UTP25; the interaction is required for CAPN3 translocation to the nucleolus. Isoform I is skeletal muscle specific.

The protein localises to the cytoplasm. Its subcellular location is the nucleus. It localises to the nucleolus. It carries out the reaction Broad endopeptidase activity.. Activated by micromolar concentrations of calcium and inhibited by calpastatin. Its function is as follows. Calcium-regulated non-lysosomal thiol-protease. Proteolytically cleaves CTBP1 at 'His-409'. Mediates, with UTP25, the proteasome-independent degradation of p53/TP53. This Homo sapiens (Human) protein is Calpain-3.